Consider the following 8515-residue polypeptide: Nonribosomal peptide synthetase 8 (8515 aa).

2 adenylation regions span residues 59–736 (REHH…YRCS) and 1163–1705 (AKLS…EWVE). The condensation 1 stretch occupies residues 587 to 1159 (RRVVQWLENL…TVGEVALVGD (573 aa)). In terms of domain architecture, Carrier 1 spans 615-691 (EPETAMERRL…ELAPRVKVAE (77 aa)). Ser652 carries the post-translational modification O-(pantetheine 4'-phosphoryl)serine. The region spanning 1732-1808 (RGLTPTETVI…KLGRHADHSS (77 aa)) is the Carrier 2 domain. At Ser1769 the chain carries O-(pantetheine 4'-phosphoryl)serine. Residues 1830–2273 (LSPIQQWFFE…TLYDCPLAAL (444 aa)) are epimerase 1. The segment at 2301-2709 (SHIQEGILLS…RSPEAVLHDL (409 aa)) is condensation 2. Positions 2733–3266 (QCLHWLIEQW…RMILSWLSEP (534 aa)) are adenylation 3. Residues 3286-3362 (TTLGPVEKQM…KVTPRTISLS (77 aa)) enclose the Carrier 3 domain. At Ser3323 the chain carries O-(pantetheine 4'-phosphoryl)serine. The interval 3406–3819 (SPMQEGILLA…DNSGCSVKTV (414 aa)) is condensation 3. The Carrier 4 domain maps to 3857-3933 (EPTNLIALTV…EVFEHARFSD (77 aa)). Ser3894 is subject to O-(pantetheine 4'-phosphoryl)serine. Residues 3953–4392 (LSPIQKLHFH…TPSDFQLLSL (440 aa)) are epimerase 2. Residues 4420–4823 (PCSPMQEGIL…ARPRARLGTI (404 aa)) form a condensation 4 region. The tract at residues 4837-5363 (WNEQARRPVV…RKVNKWLESF (527 aa)) is adenylation 4. One can recognise a Carrier 5 domain in the interval 5385 to 5461 (PPLTPIQQTI…SLAACATAII (77 aa)). Ser5422 carries the post-translational modification O-(pantetheine 4'-phosphoryl)serine. The segment at 5508–5923 (SPMQEGILFS…SLVDHLSLCS (416 aa)) is condensation 5. The adenylation 5 stretch occupies residues 5941–6459 (ELRQCLHELI…GKVDRQALRR (519 aa)). In terms of domain architecture, Carrier 6 spans 6482–6558 (PISTAEEQQM…DLATLLESPA (77 aa)). Ser6519 carries the O-(pantetheine 4'-phosphoryl)serine modification. The interval 6606–6992 (CTPLQESLMA…SQMKSVMGTL (387 aa)) is condensation 6. The adenylation 6 stretch occupies residues 7030 to 7544 (VEDLIISRAQ…SSGKLARKGV (515 aa)). In terms of domain architecture, Carrier 7 spans 7575–7651 (IASSSVERAI…HLASREDLTA (77 aa)). O-(pantetheine 4'-phosphoryl)serine is present on Ser7612. The epimerase 3 stretch occupies residues 7670–8119 (LTPIQRFFFC…DYPRARLDYT (450 aa)). The condensation 7 stretch occupies residues 8164 to 8504 (HFIWKIAGTK…DPTSPLQFAD (341 aa)). Residues 8488-8500 (AVNSVSSDPTSPL) are compositionally biased toward polar residues. Positions 8488 to 8515 (AVNSVSSDPTSPLQFADGQDPMPVSHQP) are disordered.

Belongs to the NRP synthetase family.

Nonribosomal peptide synthesis (NRPS) is a key mechanism responsible for the biosynthesis of bioactive metabolites which are potentially contributing to organismal virulence. However, contarary to other nonribosomal peptide synthases, NRPS8 does not encode a secreted peptide, but has more a structural role since it is involved in germ tube formation. This Aspergillus fumigatus (strain ATCC MYA-4609 / CBS 101355 / FGSC A1100 / Af293) (Neosartorya fumigata) protein is Nonribosomal peptide synthetase 8 (NRPS8).